Consider the following 486-residue polypeptide: MTAISNHVGTIVKLNPDYTQMDAVYLTNKLLNLIGDAALDLPGDADPLTNLDLMVKAAQENGKIPDSQAARQILEAQLMDLATPTPSRINQLFWDKYQAGPRVATDWFFALSRANNYIQTRAIAKNVVFPAKTEYGDLEITINLSKPEKDPKDIAAAAHAAQSGYPACALCLQTEGYAGRTDFAARTNHRIIRFLLGGKTWGFQYSPYAYFNEHAIFLDAIHEPMVIDQSTFSNLLAIVSMFPTYFVGSNADLPIVGGSMLTHEHYQGGRHTFPMAKAPIETQVEISGHPHVFAGIVKWPMSVIRLVSADSDELINAAEHVRQVWNQYTDETVDVRAFVDGKPHHTVTPIARRVGSEFQLDLVLRDNQTSAEHPDGIFHPHQDVQHIKKENIGLIEVMGRAILPARLKSELAEVQKYLLGEANTMKPMHKTWADQLKAKYDWTPENVEAQMQAAVGRVFARVLEDAGVFKRDEVGQKAFARFCRAL.

This sequence belongs to the galactose-1-phosphate uridylyltransferase type 2 family.

The protein localises to the cytoplasm. The catalysed reaction is alpha-D-galactose 1-phosphate + UDP-alpha-D-glucose = alpha-D-glucose 1-phosphate + UDP-alpha-D-galactose. It functions in the pathway carbohydrate metabolism; galactose metabolism. The protein is Galactose-1-phosphate uridylyltransferase of Lacticaseibacillus casei (strain BL23) (Lactobacillus casei).